We begin with the raw amino-acid sequence, 449 residues long: Phosphoglucosamine mutase (449 aa).

The Phosphoserine intermediate role is filled by S103. Residues S103, D240, D242, and D244 each coordinate Mg(2+). At S103 the chain carries Phosphoserine.

The protein belongs to the phosphohexose mutase family. The cofactor is Mg(2+). Post-translationally, activated by phosphorylation.

The catalysed reaction is alpha-D-glucosamine 1-phosphate = D-glucosamine 6-phosphate. Catalyzes the conversion of glucosamine-6-phosphate to glucosamine-1-phosphate. This chain is Phosphoglucosamine mutase, found in Thermobifida fusca (strain YX).